We begin with the raw amino-acid sequence, 141 residues long: Hemoglobin subunit alpha (141 aa).

A Globin domain is found at 1–141; sequence VLSPADKNNV…VSTVLTSKYR (141 aa). Serine 3 carries the post-translational modification Phosphoserine. 2 positions are modified to N6-succinyllysine: lysine 7 and lysine 11. Lysine 16 is modified (N6-acetyllysine; alternate). Lysine 16 carries the post-translational modification N6-succinyllysine; alternate. Phosphotyrosine is present on tyrosine 24. The residue at position 35 (serine 35) is a Phosphoserine. Lysine 40 bears the N6-succinyllysine mark. Serine 49 carries the post-translational modification Phosphoserine. Residue histidine 58 coordinates O2. Histidine 87 is a heme b binding site. Residue serine 102 is modified to Phosphoserine. Phosphothreonine is present on threonine 108. A phosphoserine mark is found at serine 124 and serine 131. Phosphothreonine is present on residues threonine 134 and threonine 137. Serine 138 is modified (phosphoserine).

Belongs to the globin family. In terms of assembly, heterotetramer of two alpha chains and two beta chains. In terms of tissue distribution, red blood cells.

In terms of biological role, involved in oxygen transport from the lung to the various peripheral tissues. Its function is as follows. Hemopressin acts as an antagonist peptide of the cannabinoid receptor CNR1. Hemopressin-binding efficiently blocks cannabinoid receptor CNR1 and subsequent signaling. The protein is Hemoglobin subunit alpha (HBA) of Urocitellus townsendii (Townsend's ground squirrel).